Consider the following 465-residue polypeptide: MDKDQFHVIIVGGSIAGLTLAHCLHRAGISHVVLEKASEPAPQIGASIGILPNGARVLDQLQLYETIEQYIEPLETATIGYPDGFRFSSSYPKLVNERFGFPIAFLDRQKLLEILYQHYPDKSRIRLAARVVSIESSSIDSTITMEDGTIYKGHLIVGADGVHSRVRAEMWKAAQRINPGMTVEYSCIFGISAPIKGLIVGEQVNAFFDHLTIVTIHGKKGRVYWFLIQKLDRKYVYPECPRFTAKEIGPIVNHLKEVKFFKDITFGQLWDSRETASMTALEENVFDTWYHGRMVLMGDSAHKMTPNIGQGANMAIEDAAVLSSLLSDLLQKQTQPPTNAQIEKLLAQYREVRHPRVNSIYKTSRFLVRFQARDGIFNTLFGRYYAPHAGDLPADMASKTIAGGELCAYLPSPSRCSYGWEKYKNSGLGRTVWCVLVLLLSALTWSCLGNMNIIMELPKRVSMMR.

Residues 5 to 25 (QFHVIIVGGSIAGLTLAHCLH) form a helical membrane-spanning segment. Glutamate 35, glycine 49, arginine 108, aspartate 299, and alanine 312 together coordinate FAD. The chain crosses the membrane as a helical span at residues 435–455 (VLVLLLSALTWSCLGNMNIIM).

Belongs to the paxM FAD-dependent monooxygenase family. It depends on FAD as a cofactor.

The protein resides in the membrane. It functions in the pathway secondary metabolite biosynthesis. Functionally, FAD-dependent monooxygenase; part of the gene cluster that mediates the biosynthesis of the indole diterpenes penitrems. The geranylgeranyl diphosphate (GGPP) synthase penG catalyzes the first step in penitrem biosynthesis via conversion of farnesyl pyrophosphate and isopentyl pyrophosphate into geranylgeranyl pyrophosphate (GGPP). Condensation of indole-3-glycerol phosphate with GGPP by the prenyl transferase penC then forms 3-geranylgeranylindole (3-GGI). Epoxidation by the FAD-dependent monooxygenase penM leads to a epoxidized-GGI that is substrate of the terpene cyclase penB for cyclization to yield paspaline. Paspaline is subsequently converted to 13-desoxypaxilline by the cytochrome P450 monooxygenase penP, the latter being then converted to paxilline by the cytochrome P450 monooxygenase penQ. Paxilline is converted to beta-paxitriol via C-10 ketoreduction by the short-chain dehydrogenase PC-15 which can be monoprenylated at the C-20 by the indole diterpene prenyltransferase penD. A two-step elimination (acetylation and elimination) process performed by the O-acetyltransferase PC-16 and the P.simplicissimum ptmI-ortholog not yet identified in P.crustosum, leads to the production of the prenylated form of penijanthine. The FAD-linked oxidoreductase ptmO then converts the prenylated form of penijanthine into PC-M5 which is in turn transformed into PC-M4 by the aromatic dimethylallyltransferase PC-22. A series of oxidation steps involving 4 cytochrome P450 monooxygenases (PC-21, PC-05, PC-23, PC-20) and a FAD-dependent monooxygenase (PC-14) are required for the transformation of PC-M4 to penitrems A and E. Synthesis of these final products is proposed to proceed via penitrems D and C (PC-21, PC-05, PC-14) and penitrems B and F (PC-21, PC-05, PC-14, PC-23). The protein is FAD-dependent monooxygenase penM of Penicillium crustosum (Blue mold fungus).